A 262-amino-acid polypeptide reads, in one-letter code: Glucosamine-6-phosphate deaminase (262 aa).

Residue D63 is the Proton acceptor; for enolization step of the active site. N129 (for ring-opening step) is an active-site residue. The active-site Proton acceptor; for ring-opening step is H131. The active-site For ring-opening step is the E136.

It belongs to the glucosamine/galactosamine-6-phosphate isomerase family. NagB subfamily.

The enzyme catalyses alpha-D-glucosamine 6-phosphate + H2O = beta-D-fructose 6-phosphate + NH4(+). It participates in amino-sugar metabolism; N-acetylneuraminate degradation; D-fructose 6-phosphate from N-acetylneuraminate: step 5/5. Catalyzes the reversible isomerization-deamination of glucosamine 6-phosphate (GlcN6P) to form fructose 6-phosphate (Fru6P) and ammonium ion. This is Glucosamine-6-phosphate deaminase from Bacillus cereus (strain B4264).